Here is a 62-residue protein sequence, read N- to C-terminus: uncharacterized protein (62 aa).

The protein belongs to the asfivirus C62L family.

This is an uncharacterized protein from African swine fever virus (isolate Tick/South Africa/Pretoriuskop Pr4/1996) (ASFV).